The primary structure comprises 273 residues: GATA-type zinc finger protein 1 (273 aa).

Disordered stretches follow at residues 99-143 and 172-201; these read RDSK…ERVD and SSRS…AGSE. The GATA-type zinc-finger motif lies at 208–232; that stretch reads CASCRTQRTPLWRDAEDGTPLCNAC.

It localises to the nucleus. Transcriptional regulator that plays a key role in germ cell development. Determines the oogenic fate by activating key genes for the oogenic program and meiotic prophase entry. Acts downstream of bone morphogenetic protein (BMP) by regulating expression of genes required for the oogenic programs, which are repressed by Polycomb activities in sexually uncommitted germ cells. Regulates expression of STRA8, a central downstream effector for the meiotic program. Acts independently of retinoic acid (RA). In males, not required for germ-cell sex determination, but required to allow the spermatogonia to efficiently accomplish the meiotic prophase. This chain is GATA-type zinc finger protein 1, found in Homo sapiens (Human).